A 142-amino-acid chain; its full sequence is Large ribosomal subunit protein uL11 (142 aa).

This sequence belongs to the universal ribosomal protein uL11 family. Part of the ribosomal stalk of the 50S ribosomal subunit. Interacts with L10 and the large rRNA to form the base of the stalk. L10 forms an elongated spine to which L12 dimers bind in a sequential fashion forming a multimeric L10(L12)X complex. In terms of processing, one or more lysine residues are methylated.

Its function is as follows. Forms part of the ribosomal stalk which helps the ribosome interact with GTP-bound translation factors. This is Large ribosomal subunit protein uL11 from Shewanella oneidensis (strain ATCC 700550 / JCM 31522 / CIP 106686 / LMG 19005 / NCIMB 14063 / MR-1).